The chain runs to 290 residues: Ribosomal RNA small subunit methyltransferase H (290 aa).

Residues 35–37 (GGH), aspartate 54, phenylalanine 81, aspartate 97, and glutamine 104 each bind S-adenosyl-L-methionine.

Belongs to the methyltransferase superfamily. RsmH family.

It is found in the cytoplasm. The catalysed reaction is cytidine(1402) in 16S rRNA + S-adenosyl-L-methionine = N(4)-methylcytidine(1402) in 16S rRNA + S-adenosyl-L-homocysteine + H(+). Its function is as follows. Specifically methylates the N4 position of cytidine in position 1402 (C1402) of 16S rRNA. This is Ribosomal RNA small subunit methyltransferase H from Picosynechococcus sp. (strain ATCC 27264 / PCC 7002 / PR-6) (Agmenellum quadruplicatum).